The primary structure comprises 83 residues: Mu-theraphotoxin-Hhn2j 4 (83 aa).

Residues 1–21 (MKASMFLALAGSVLLFVVGYA) form the signal peptide. Residues 22–48 (SESEEKEFPIELLSKIFAVDVFKGEER) constitute a propeptide that is removed on maturation. Intrachain disulfides connect C50–C65, C57–C70, and C64–C77. L81 is subject to Leucine amide.

This sequence belongs to the neurotoxin 10 (Hwtx-1) family. 15 (Hntx-3) subfamily. Monomer. Expressed by the venom gland.

It is found in the secreted. Functionally, lethal neurotoxin. Selectively blocks tetrodotoxin-sensitive voltage-gated sodium channels (Nav). Does not affect tetrodotoxin-resistant voltage-gated sodium channels or calcium channels. The sequence is that of Mu-theraphotoxin-Hhn2j 4 from Cyriopagopus hainanus (Chinese bird spider).